Consider the following 285-residue polypeptide: Energy-coupling factor transporter ATP-binding protein EcfA2 (285 aa).

The 243-residue stretch at 3–245 (INFEQVNFSY…DLVWFKTVAL (243 aa)) folds into the ABC transporter domain. Residue 40 to 47 (GQTGSGKS) participates in ATP binding. Catalysis depends on Glu171, which acts as the Proton acceptor.

It belongs to the ABC transporter superfamily. Energy-coupling factor EcfA family. Forms a stable energy-coupling factor (ECF) transporter complex probably composed of 2 membrane-embedded substrate-binding proteins (S component), 2 ATP-binding proteins (A component) and 2 transmembrane proteins (T component). This complex interacts with a number of substrate-specific components, including FolT, PanT and RibU for 5-formyltetrahydrofolate, pantothenate and riboflavin respectively.

The protein localises to the cell membrane. Its function is as follows. ATP-binding (A) component of a common energy-coupling factor (ECF) ABC-transporter complex. Unlike classic ABC transporters this ECF transporter provides the energy necessary to transport a number of different substrates including 5-formyltetrahydrofolate, pantothenate and riboflavin. Expression of the complex plus FolT in E.coli allows 5-formyltetrahydrofolate uptake; 5-formyltetrahydrofolate is not taken up in the absence of FolT or the EcfA1A2T complex. This chain is Energy-coupling factor transporter ATP-binding protein EcfA2, found in Leuconostoc mesenteroides subsp. mesenteroides (strain ATCC 8293 / DSM 20343 / BCRC 11652 / CCM 1803 / JCM 6124 / NCDO 523 / NBRC 100496 / NCIMB 8023 / NCTC 12954 / NRRL B-1118 / 37Y).